Reading from the N-terminus, the 77-residue chain is Large ribosomal subunit protein bL28 (77 aa).

This sequence belongs to the bacterial ribosomal protein bL28 family.

The sequence is that of Large ribosomal subunit protein bL28 from Albidiferax ferrireducens (strain ATCC BAA-621 / DSM 15236 / T118) (Rhodoferax ferrireducens).